Reading from the N-terminus, the 908-residue chain is Protein translocase subunit SecA (908 aa).

Residues Q87, 105 to 109 (GEGKT), and D511 contribute to the ATP site. Basic and acidic residues predominate over residues 559–570 (ERHESRRIDNQL). 2 disordered regions span residues 559–582 (ERHE…DPGS) and 841–908 (RRRR…GRLE). Low complexity predominate over residues 847 to 856 (LAQQMQRAQA). The span at 862 to 873 (TEEDSDAEEQAE) shows a compositional bias: acidic residues. Residues C892, C894, C903, and H904 each coordinate Zn(2+). Residues 898–908 (KKYKQCHGRLE) are compositionally biased toward basic residues.

The protein belongs to the SecA family. Monomer and homodimer. Part of the essential Sec protein translocation apparatus which comprises SecA, SecYEG and auxiliary proteins SecDF-YajC and YidC. It depends on Zn(2+) as a cofactor.

It localises to the cell inner membrane. It is found in the cytoplasm. The enzyme catalyses ATP + H2O + cellular proteinSide 1 = ADP + phosphate + cellular proteinSide 2.. In terms of biological role, part of the Sec protein translocase complex. Interacts with the SecYEG preprotein conducting channel. Has a central role in coupling the hydrolysis of ATP to the transfer of proteins into and across the cell membrane, serving both as a receptor for the preprotein-SecB complex and as an ATP-driven molecular motor driving the stepwise translocation of polypeptide chains across the membrane. The sequence is that of Protein translocase subunit SecA from Hahella chejuensis (strain KCTC 2396).